The following is a 107-amino-acid chain: Cytochrome c2 (107 aa).

Gln-1 carries the post-translational modification Pyrrolidone carboxylic acid. Heme c is bound by residues Cys-13, Cys-16, His-17, and Met-79.

The protein belongs to the cytochrome c family. In terms of processing, binds 1 heme c group covalently per subunit.

The protein localises to the periplasm. In terms of biological role, cytochrome c2 is found mainly in purple, non-sulfur, photosynthetic bacteria where it functions as the electron donor to the oxidized bacteriochlorophyll in the photophosphorylation pathway. However, it may also have a role in the respiratory chain and is found in some non-photosynthetic bacteria. This Rhodoplanes tepidamans (Rhodoplanes cryptolactis) protein is Cytochrome c2.